We begin with the raw amino-acid sequence, 461 residues long: Alpha-tubulin N-acetyltransferase 1 (461 aa).

The region spanning 2–189 (VEFRFDIKPL…NNFVLYEGFF (188 aa)) is the N-acetyltransferase domain. Acetyl-CoA-binding positions include 123–136 (FYVHESRQRAGLGK) and 159–168 (SEKLLSFLSK). 3 disordered regions span residues 196-295 (NGGG…GNHD), 314-362 (NSYE…PEVA), and 418-443 (RPPGHEVTSPGQDNTDAMSTVSSGGG). Polar residues predominate over residues 233–254 (RRGSQQQTTPNARLQQITQISP). Residues 283–293 (GSAEANSGNGN) are compositionally biased toward low complexity. Acidic residues predominate over residues 318 to 336 (PEPEVEPEPEPEPEPEPEP). The segment covering 339–356 (ITPPSPPPKSHTPTPPSV) has biased composition (pro residues). Positions 426–439 (SPGQDNTDAMSTVS) are enriched in polar residues.

This sequence belongs to the acetyltransferase ATAT1 family.

It catalyses the reaction L-lysyl-[alpha-tubulin] + acetyl-CoA = N(6)-acetyl-L-lysyl-[alpha-tubulin] + CoA + H(+). Functionally, specifically acetylates 'Lys-40' in alpha-tubulin on the lumenal side of microtubules. Promotes microtubule destabilization and accelerates microtubule dynamics; this activity may be independent of acetylation activity. Acetylates alpha-tubulin with a slow enzymatic rate, due to a catalytic site that is not optimized for acetyl transfer. Enters the microtubule through each end and diffuses quickly throughout the lumen of microtubules. Acetylates only long/old microtubules because of its slow acetylation rate since it does not have time to act on dynamically unstable microtubules before the enzyme is released. Acetylates central spindle microtubules. This Drosophila melanogaster (Fruit fly) protein is Alpha-tubulin N-acetyltransferase 1.